The sequence spans 292 residues: Ubiquinone biosynthesis protein UbiV (292 aa).

[4Fe-4S] cluster-binding residues include Cys-39, Cys-180, Cys-193, and Cys-197.

Belongs to the peptidase U32 family. UbiV subfamily. As to quaternary structure, forms a heterodimer with UbiU. The cofactor is [4Fe-4S] cluster.

It functions in the pathway cofactor biosynthesis; ubiquinone biosynthesis. Required for O(2)-independent ubiquinone (coenzyme Q) biosynthesis. Together with UbiU, is essential for the C6-hydroxylation reaction in the oxygen-independent ubiquinone biosynthesis pathway. This is Ubiquinone biosynthesis protein UbiV from Escherichia coli (strain K12).